Here is a 286-residue protein sequence, read N- to C-terminus: Ribosome maturation factor RimP (286 aa).

The segment covering 200-224 (LDGEDGDDTGVDAGDPDQDDADDAL) has biased composition (acidic residues). The tract at residues 200 to 286 (LDGEDGDDTG…ANASTVKETH (87 aa)) is disordered. A compositionally biased stretch (basic residues) spans 248-267 (VGRKAKGKKASPKKSNAKKK). Residues 273–286 (AASSANASTVKETH) show a composition bias toward polar residues.

Belongs to the RimP family.

Its subcellular location is the cytoplasm. Functionally, required for maturation of 30S ribosomal subunits. The sequence is that of Ribosome maturation factor RimP from Xanthobacter autotrophicus (strain ATCC BAA-1158 / Py2).